Consider the following 248-residue polypeptide: tRNA pseudouridine synthase A (248 aa).

The active-site Nucleophile is D54. Y112 serves as a coordination point for substrate.

The protein belongs to the tRNA pseudouridine synthase TruA family. As to quaternary structure, homodimer.

It carries out the reaction uridine(38/39/40) in tRNA = pseudouridine(38/39/40) in tRNA. Formation of pseudouridine at positions 38, 39 and 40 in the anticodon stem and loop of transfer RNAs. This Geobacillus sp. (strain WCH70) protein is tRNA pseudouridine synthase A.